Here is a 268-residue protein sequence, read N- to C-terminus: Phosphatidylglycerol--prolipoprotein diacylglyceryl transferase (268 aa).

7 helical membrane passes run 10–30, 56–76, 92–112, 120–140, 174–194, 202–222, and 236–256; these read VALA…LIGI, LVFW…VLFY, WKGG…ALWF, FFEL…AGRI, PSQL…LWLF, MAVS…VEFV, and WLTQ…VLIW. Arg139 serves as a coordination point for a 1,2-diacyl-sn-glycero-3-phospho-(1'-sn-glycerol).

It belongs to the Lgt family.

The protein resides in the cell inner membrane. The enzyme catalyses L-cysteinyl-[prolipoprotein] + a 1,2-diacyl-sn-glycero-3-phospho-(1'-sn-glycerol) = an S-1,2-diacyl-sn-glyceryl-L-cysteinyl-[prolipoprotein] + sn-glycerol 1-phosphate + H(+). The protein operates within protein modification; lipoprotein biosynthesis (diacylglyceryl transfer). Its function is as follows. Catalyzes the transfer of the diacylglyceryl group from phosphatidylglycerol to the sulfhydryl group of the N-terminal cysteine of a prolipoprotein, the first step in the formation of mature lipoproteins. In Pseudomonas putida (strain ATCC 47054 / DSM 6125 / CFBP 8728 / NCIMB 11950 / KT2440), this protein is Phosphatidylglycerol--prolipoprotein diacylglyceryl transferase.